Here is a 60-residue protein sequence, read N- to C-terminus: UPF0391 membrane protein CCNA_00709 (60 aa).

The next 2 membrane-spanning stretches (helical) occupy residues 4-24 (WAIILAIVALIAGALGFSGLA) and 33-53 (ILFFLFLVGFVLVLLLGGTVF).

The protein belongs to the UPF0391 family.

It is found in the cell membrane. The chain is UPF0391 membrane protein CCNA_00709 from Caulobacter vibrioides (strain NA1000 / CB15N) (Caulobacter crescentus).